We begin with the raw amino-acid sequence, 206 residues long: Large ribosomal subunit protein mL40 (206 aa).

The N-terminal 46 residues, 1 to 46, are a transit peptide targeting the mitochondrion; that stretch reads MTASVLRSISLALRPTSGLLGTWQTQLRETHQRASLLSFWELIPMR. Residues 168 to 192 form a disordered region; the sequence is LFPFEKEGPHYTPPIPNYQPPEGRY.

It belongs to the mitochondrion-specific ribosomal protein mL40 family. In terms of assembly, component of the mitochondrial large ribosomal subunit (mt-LSU). Mature mammalian 55S mitochondrial ribosomes consist of a small (28S) and a large (39S) subunit. The 28S small subunit contains a 12S ribosomal RNA (12S mt-rRNA) and 30 different proteins. The 39S large subunit contains a 16S rRNA (16S mt-rRNA), a copy of mitochondrial valine transfer RNA (mt-tRNA(Val)), which plays an integral structural role, and 52 different proteins. mL40 binds to the major groove of the anticodon stem of mt-tRNA(Val) in the central protuberance. In terms of tissue distribution, ubiquitous.

Its subcellular location is the mitochondrion. This chain is Large ribosomal subunit protein mL40 (MRPL40), found in Homo sapiens (Human).